The chain runs to 258 residues: Pimeloyl-[acyl-carrier protein] methyl ester esterase (258 aa).

Residues 16 to 242 (LVLLHGWGLN…AAHAPFISHP (227 aa)) form the AB hydrolase-1 domain. Substrate-binding positions include Trp-22, 82–83 (SM), and 143–147 (FLALQ). Residue Ser-82 is the Nucleophile of the active site. Residues Asp-207 and His-235 contribute to the active site. His-235 contacts substrate.

The protein belongs to the AB hydrolase superfamily. Carboxylesterase BioH family. Monomer.

The protein resides in the cytoplasm. The enzyme catalyses 6-carboxyhexanoyl-[ACP] methyl ester + H2O = 6-carboxyhexanoyl-[ACP] + methanol + H(+). It participates in cofactor biosynthesis; biotin biosynthesis. Functionally, the physiological role of BioH is to remove the methyl group introduced by BioC when the pimeloyl moiety is complete. It allows to synthesize pimeloyl-ACP via the fatty acid synthetic pathway through the hydrolysis of the ester bonds of pimeloyl-ACP esters. The sequence is that of Pimeloyl-[acyl-carrier protein] methyl ester esterase from Yersinia pseudotuberculosis serotype O:1b (strain IP 31758).